The sequence spans 209 residues: MKQADELRFNEDGLIPAIVQDAASKEVLTLAYMNKESYEKTLETKETWFYSRSRQALWHKGETSGNTQAVKGIRYDCDQDALLVLVEPSGPACHTGSYSCFTKEQTEEQAADRFGIMNELERVIAERQAEMPEGAYTTYLFREGVDKILKKVGEEASEVIIAAKNRDHEELKWEAADLLYHLLVLLREQSLPLDDVLDVLKKRHSEIEE.

The phosphoribosyl-AMP cyclohydrolase stretch occupies residues 1–116 (MKQADELRFN…EEQAADRFGI (116 aa)). Residues 117–209 (MNELERVIAE…LKKRHSEIEE (93 aa)) form a phosphoribosyl-ATP pyrophosphohydrolase region.

In the N-terminal section; belongs to the PRA-CH family. This sequence in the C-terminal section; belongs to the PRA-PH family.

It localises to the cytoplasm. The enzyme catalyses 1-(5-phospho-beta-D-ribosyl)-ATP + H2O = 1-(5-phospho-beta-D-ribosyl)-5'-AMP + diphosphate + H(+). The catalysed reaction is 1-(5-phospho-beta-D-ribosyl)-5'-AMP + H2O = 1-(5-phospho-beta-D-ribosyl)-5-[(5-phospho-beta-D-ribosylamino)methylideneamino]imidazole-4-carboxamide. It functions in the pathway amino-acid biosynthesis; L-histidine biosynthesis; L-histidine from 5-phospho-alpha-D-ribose 1-diphosphate: step 2/9. It participates in amino-acid biosynthesis; L-histidine biosynthesis; L-histidine from 5-phospho-alpha-D-ribose 1-diphosphate: step 3/9. The protein is Histidine biosynthesis bifunctional protein HisIE (hisI) of Bacillus subtilis (strain 168).